The primary structure comprises 564 residues: NAD-dependent malic enzyme (564 aa).

Tyr-102 functions as the Proton donor in the catalytic mechanism. Arg-155 lines the NAD(+) pocket. Lys-173 acts as the Proton acceptor in catalysis. A divalent metal cation contacts are provided by Glu-244, Asp-245, and Asp-268. Positions 268 and 417 each coordinate NAD(+).

This sequence belongs to the malic enzymes family. As to quaternary structure, homotetramer. It depends on Mg(2+) as a cofactor. Mn(2+) is required as a cofactor.

It carries out the reaction (S)-malate + NAD(+) = pyruvate + CO2 + NADH. The catalysed reaction is oxaloacetate + H(+) = pyruvate + CO2. The sequence is that of NAD-dependent malic enzyme from Pseudomonas aeruginosa (strain ATCC 15692 / DSM 22644 / CIP 104116 / JCM 14847 / LMG 12228 / 1C / PRS 101 / PAO1).